We begin with the raw amino-acid sequence, 134 residues long: Methylglyoxal synthase (134 aa).

The MGS-like domain maps to 1–134; the sequence is MNIALIAHDN…DWRERVKERG (134 aa). Residues H8, K12, 34 to 37, and 54 to 55 contribute to the substrate site; these read TGTT and SG. The active-site Proton donor/acceptor is the D60. H87 provides a ligand contact to substrate.

This sequence belongs to the methylglyoxal synthase family.

The catalysed reaction is dihydroxyacetone phosphate = methylglyoxal + phosphate. Functionally, catalyzes the formation of methylglyoxal from dihydroxyacetone phosphate. The chain is Methylglyoxal synthase from Alkaliphilus metalliredigens (strain QYMF).